The following is a 488-amino-acid chain: GTPase Der (488 aa).

EngA-type G domains lie at 3–166 (PVVA…AEAM) and 199–372 (IKLA…DSAT). GTP is bound by residues 9–16 (GRPNVGKS), 56–60 (DTGGI), 118–121 (NKVD), 205–212 (GKPNVGKS), 252–256 (DTAGV), and 317–320 (NKWD). In terms of domain architecture, KH-like spans 373 to 457 (RRVSTSMLTR…PIQLRFQEGD (85 aa)). The disordered stretch occupies residues 469–488 (MSQERRRKRALSHIKDRKTK). The segment covering 473 to 488 (RRRKRALSHIKDRKTK) has biased composition (basic residues).

Belongs to the TRAFAC class TrmE-Era-EngA-EngB-Septin-like GTPase superfamily. EngA (Der) GTPase family. In terms of assembly, associates with the 50S ribosomal subunit.

Its function is as follows. GTPase that plays an essential role in the late steps of ribosome biogenesis. The polypeptide is GTPase Der (Shewanella putrefaciens (strain CN-32 / ATCC BAA-453)).